A 254-amino-acid chain; its full sequence is Phosphoribosylaminoimidazole-succinocarboxamide synthase (254 aa).

Belongs to the SAICAR synthetase family.

The enzyme catalyses 5-amino-1-(5-phospho-D-ribosyl)imidazole-4-carboxylate + L-aspartate + ATP = (2S)-2-[5-amino-1-(5-phospho-beta-D-ribosyl)imidazole-4-carboxamido]succinate + ADP + phosphate + 2 H(+). Its pathway is purine metabolism; IMP biosynthesis via de novo pathway; 5-amino-1-(5-phospho-D-ribosyl)imidazole-4-carboxamide from 5-amino-1-(5-phospho-D-ribosyl)imidazole-4-carboxylate: step 1/2. The protein is Phosphoribosylaminoimidazole-succinocarboxamide synthase of Brucella melitensis biotype 2 (strain ATCC 23457).